The sequence spans 732 residues: Formin-homology and zinc finger domains protein 1 (732 aa).

Low complexity-rich tracts occupy residues 1–12, 19–45, 121–137, and 240–251; these read MMLASSAPTAPS, QPSA…SDAS, QQQQ…QSSS, and SSPKSPTSPTQP. The first 27 residues, 1 to 27, serve as a signal peptide directing secretion; the sequence is MMLASSAPTAPSLLPPSSQPSAATTRA. Disordered stretches follow at residues 1–45, 121–141, and 232–267; these read MMLA…SDAS, QQQQ…SDRK, and RGRP…RRNT. Residues 256 to 267 show a composition bias toward polar residues; it reads SQASSLPSRRNT. One can recognise an FH2 domain in the interval 355 to 732; it reads PISLSSSIIP…DDHHINVSSP (378 aa).

Belongs to the formin homology family. As to expression, transiently expressed in all mesoderm derived progenitor body wall muscle cells before they differentiate.

In terms of biological role, acts redundantly with hlh-1 to promote body wall muscle cell and coelomocyte specification in postembryonic mesoderm progenitors, probably through suppression of sem-2. In Caenorhabditis elegans, this protein is Formin-homology and zinc finger domains protein 1.